The sequence spans 419 residues: MGEKKPEPLDFVKDFQEYLTQQTHHVNMISGSVSGDKEAEALQGAGTDGDQNGLDHPSVEVSLDENSGMLVDGFERTFDGKLKCRYCNYASKGTARLIEHIRIHTGEKPHRCHLCPFASAYERHLEAHMRSHTGEKPYKCELCSFRCSDRSNLSHHRRRKHKMVPIKGTRSSLSSKKMWGVLQKKTSNLGYSRRALINLSPPSMVVQKPDYLNDFTHEIPNIQTDSYESMAKTTPTGGLPRDPQELMVDNPLNQLSTLAGQLSSLPPENQNPASPDVVPCPDEKPFMIQQPSTQAVVSAVSASIPQSSSPTSPEPRPSHSQRNYSPVAGPSSEPSAHTSTPSIGNSQPSTPAPALPVQDPQLLHHCQHCDMYFADNILYTIHMGCHGYENPFQCNICGCKCKNKYDFACHFARGQHNQH.

A Glycyl lysine isopeptide (Lys-Gly) (interchain with G-Cter in SUMO2) cross-link involves residue Lys-5. 3 C2H2-type zinc fingers span residues 82 to 104, 110 to 132, and 138 to 161; these read LKCR…IRIH, HRCH…MRSH, and YKCE…RRKH. Residue Lys-185 forms a Glycyl lysine isopeptide (Lys-Gly) (interchain with G-Cter in SUMO2) linkage. 2 stretches are compositionally biased toward polar residues: residues 223-236 and 262-273; these read QTDS…TTPT and LSSLPPENQNPA. Disordered regions lie at residues 223-247 and 262-356; these read QTDS…QELM and LSSL…PALP. The segment covering 290 to 311 has biased composition (low complexity); sequence QPSTQAVVSAVSASIPQSSSPT. The segment covering 332–349 has biased composition (polar residues); sequence SEPSAHTSTPSIGNSQPS. 2 consecutive C2H2-type zinc fingers follow at residues 364–386 and 392–416; these read HHCQ…MGCH and FQCN…RGQH.

This sequence belongs to the Ikaros C2H2-type zinc-finger protein family. As to quaternary structure, self-associates. Interacts with other family members; IKZF1, IKZF2, IKZF3 and IKZF4. Expressed in brain, heart, skeletal muscle, kidney, and liver. Expressed in the hematopoietic cell lines MOLT-4, NALM-6 and K-562. Highly expressed in THP-1 and M-07e cell lines, which have characteristics of myeloid and early megakaryocytic cells respectively.

The protein localises to the nucleus. Transcriptional repressor that binds the core 5'GNNTGTNG-3' DNA consensus sequence. Involved in megakaryocyte differentiation. The chain is Zinc finger protein Pegasus (IKZF5) from Homo sapiens (Human).